Here is a 275-residue protein sequence, read N- to C-terminus: tRNA pseudouridine synthase A (275 aa).

The active-site Nucleophile is the aspartate 56. Tyrosine 109 contacts substrate.

This sequence belongs to the tRNA pseudouridine synthase TruA family.

The enzyme catalyses uridine(38/39/40) in tRNA = pseudouridine(38/39/40) in tRNA. In terms of biological role, formation of pseudouridine at positions 38, 39 and 40 in the anticodon stem and loop of transfer RNAs. This is tRNA pseudouridine synthase A from Methanothermobacter thermautotrophicus (strain ATCC 29096 / DSM 1053 / JCM 10044 / NBRC 100330 / Delta H) (Methanobacterium thermoautotrophicum).